We begin with the raw amino-acid sequence, 227 residues long: Octanoyltransferase (227 aa).

Residues 47-223 form the BPL/LPL catalytic domain; that stretch reads EDTADEIWLL…HLLRLLPPGV (177 aa). Substrate contacts are provided by residues 87–94, 154–156, and 167–169; these read RGGQITYH, ALG, and GLA. The Acyl-thioester intermediate role is filled by cysteine 185.

Belongs to the LipB family.

Its subcellular location is the cytoplasm. The enzyme catalyses octanoyl-[ACP] + L-lysyl-[protein] = N(6)-octanoyl-L-lysyl-[protein] + holo-[ACP] + H(+). It participates in protein modification; protein lipoylation via endogenous pathway; protein N(6)-(lipoyl)lysine from octanoyl-[acyl-carrier-protein]: step 1/2. In terms of biological role, catalyzes the transfer of endogenously produced octanoic acid from octanoyl-acyl-carrier-protein onto the lipoyl domains of lipoate-dependent enzymes. Lipoyl-ACP can also act as a substrate although octanoyl-ACP is likely to be the physiological substrate. The polypeptide is Octanoyltransferase (Azoarcus sp. (strain BH72)).